Reading from the N-terminus, the 815-residue chain is Probable AMP deaminase (815 aa).

The helical transmembrane segment at 5–27 (YALHLAVATLLGASFAAASAYYM) threads the bilayer. Disordered stretches follow at residues 53 to 116 (LLDA…PVPT) and 144 to 173 (LLTN…STNM). The segment covering 105-116 (VRPTTPRSPVPT) has biased composition (low complexity). Residues 159-173 (ASQNGDTKPVPSTNM) are compositionally biased toward polar residues. Zn(2+) is bound by residues His367 and His369. Residues His369 and 438–443 (KFNLKY) each bind substrate. His635 is a Zn(2+) binding site. Glu638 contributes to the substrate binding site. Catalysis depends on His657, which acts as the Proton acceptor. Position 712 (Asp712) interacts with Zn(2+). 713-716 (DPLQ) provides a ligand contact to substrate.

This sequence belongs to the metallo-dependent hydrolases superfamily. Adenosine and AMP deaminases family. In terms of assembly, homodimer. Zn(2+) is required as a cofactor.

The protein resides in the membrane. It carries out the reaction AMP + H2O + H(+) = IMP + NH4(+). Its pathway is purine metabolism; IMP biosynthesis via salvage pathway; IMP from AMP: step 1/1. Its function is as follows. AMP deaminase plays a critical role in energy metabolism. This Oryza sativa subsp. japonica (Rice) protein is Probable AMP deaminase (AMPD).